Reading from the N-terminus, the 477-residue chain is Ribulose bisphosphate carboxylase large chain (477 aa).

A propeptide spanning residues 1-2 (MS) is cleaved from the precursor. Pro-3 carries the N-acetylproline modification. Lys-14 bears the N6,N6,N6-trimethyllysine mark. 2 residues coordinate substrate: Asn-123 and Thr-173. Lys-175 acts as the Proton acceptor in catalysis. Lys-177 contributes to the substrate binding site. Residues Lys-201, Asp-203, and Glu-204 each coordinate Mg(2+). An N6-carboxylysine modification is found at Lys-201. The Proton acceptor role is filled by His-294. Substrate is bound by residues Arg-295, His-327, and Ser-379.

It belongs to the RuBisCO large chain family. Type I subfamily. In terms of assembly, heterohexadecamer of 8 large chains and 8 small chains; disulfide-linked. The disulfide link is formed within the large subunit homodimers. Mg(2+) is required as a cofactor. In terms of processing, the disulfide bond which can form in the large chain dimeric partners within the hexadecamer appears to be associated with oxidative stress and protein turnover.

Its subcellular location is the plastid. It localises to the chloroplast. The catalysed reaction is 2 (2R)-3-phosphoglycerate + 2 H(+) = D-ribulose 1,5-bisphosphate + CO2 + H2O. It carries out the reaction D-ribulose 1,5-bisphosphate + O2 = 2-phosphoglycolate + (2R)-3-phosphoglycerate + 2 H(+). Functionally, ruBisCO catalyzes two reactions: the carboxylation of D-ribulose 1,5-bisphosphate, the primary event in carbon dioxide fixation, as well as the oxidative fragmentation of the pentose substrate in the photorespiration process. Both reactions occur simultaneously and in competition at the same active site. This is Ribulose bisphosphate carboxylase large chain from Oryza nivara (Indian wild rice).